Reading from the N-terminus, the 408-residue chain is MKVLVINAGSSSLKYQLIDMTNESALAIGLCERIGIDNSIITQKRFDGKKLEKQTDLPNHKIALEEVVKALTDSEFGVIKSMDEINAVGHRVVHGGEKFNSSALINEGVEQAIKDCFELAPLHNPPNMMGISSCQEIMPGVPMVAVFDTAFHHTIPPYAYMYALPYELYEKYGIRKYGFHGTSHFYVAKRAAAMLGKPEQDVKVITCHLGNGSSITAVKGGKSIETTMGFTPLEGVAMGTRCGSIDPAVVPFIMEKEGLSTREIDTLMNKKSGVLGVSSLSNDFRDLDEAASKGNQKAELALEIFAYKIKKVIGEYIAVLNGVDAIVFTAGIGENSATIRKRILADLDGIGIKIDEEKNKIRGQEIDISTPDATVRVLVIPTNEELTIARDTKEICETEVKLRSSVPI.

N7 provides a ligand contact to Mg(2+). K14 contacts ATP. Position 91 (R91) interacts with substrate. D148 (proton donor/acceptor) is an active-site residue. Residues 208-212 (HLGNG), 283-285 (DFR), and 331-335 (GIGEN) contribute to the ATP site. E384 lines the Mg(2+) pocket.

It belongs to the acetokinase family. In terms of assembly, homodimer. The cofactor is Mg(2+). Mn(2+) is required as a cofactor.

It localises to the cytoplasm. The catalysed reaction is acetate + ATP = acetyl phosphate + ADP. The protein operates within metabolic intermediate biosynthesis; acetyl-CoA biosynthesis; acetyl-CoA from acetate: step 1/2. Its function is as follows. Catalyzes the formation of acetyl phosphate from acetate and ATP. Can also catalyze the reverse reaction. This Methanosarcina mazei (Methanosarcina frisia) protein is Acetate kinase.